We begin with the raw amino-acid sequence, 590 residues long: Protein I'm not dead yet (590 aa).

11 helical membrane-spanning segments follow: residues 43 to 63 (GLVV…NEGA), 82 to 102 (ALPL…MGIM), 115 to 135 (TLVM…CNLH), 153 to 173 (LHFG…NAAC), 224 to 244 (LCYY…TIIG), 270 to 290 (TFMF…FVFL), 329 to 349 (LGPM…MVVM), 373 to 393 (SMPT…YAFL), 457 to 477 (VLPN…LTAF), 509 to 529 (AGLA…NALV), and 540 to 560 (MAIA…VFCQ).

The protein belongs to the SLC13A/DASS transporter (TC 2.A.47) family. NADC subfamily. In adults, abundantly expressed in the fat body, basolateral region of midgut cells and oenocytes. Low level expression is seen in the halteres, procardia, restricted regions of the esophagus and hindgut, base of the legs and in a subset of cells in the third segment of the antennae.

It localises to the basolateral cell membrane. In terms of biological role, cation-independent electroneutral transporter (not associated with membrane depolarization) of a variety of tricarboxylic and dicarboxylic acid-cycle intermediates. There is also small, but detectable, transport of monocarboxylics. Transport is through the epithelium of the gut and across the plasma membranes of organs involved in intermediary metabolism and storage. Affinity for substrates is citrate &gt; succinate &gt; pyruvate. Fumarate, a-ketoglutarate, and glutarate are also transported, but not lactate. Transport mechanism that is not coupled to Na(+), K(+), or Cl(-). Function is shown in Xenopus oocytes and human retinal pigment epithelial (HRPE) cell lines. The sequence is that of Protein I'm not dead yet (Indy) from Drosophila melanogaster (Fruit fly).